The chain runs to 331 residues: Ferrochelatase (331 aa).

2 residues coordinate Fe cation: H187 and E286.

Belongs to the ferrochelatase family.

It localises to the cytoplasm. The catalysed reaction is heme b + 2 H(+) = protoporphyrin IX + Fe(2+). It participates in porphyrin-containing compound metabolism; protoheme biosynthesis; protoheme from protoporphyrin-IX: step 1/1. Catalyzes the ferrous insertion into protoporphyrin IX. This Legionella pneumophila (strain Paris) protein is Ferrochelatase.